We begin with the raw amino-acid sequence, 212 residues long: Endonuclease III (212 aa).

Residues 108–127 form the HhH domain; that stretch reads FKELVKLPGVGRKTANVVLN. The [4Fe-4S] cluster site is built by Cys187, Cys194, Cys197, and Cys203.

It belongs to the Nth/MutY family. [4Fe-4S] cluster is required as a cofactor.

It carries out the reaction 2'-deoxyribonucleotide-(2'-deoxyribose 5'-phosphate)-2'-deoxyribonucleotide-DNA = a 3'-end 2'-deoxyribonucleotide-(2,3-dehydro-2,3-deoxyribose 5'-phosphate)-DNA + a 5'-end 5'-phospho-2'-deoxyribonucleoside-DNA + H(+). In terms of biological role, DNA repair enzyme that has both DNA N-glycosylase activity and AP-lyase activity. The DNA N-glycosylase activity releases various damaged pyrimidines from DNA by cleaving the N-glycosidic bond, leaving an AP (apurinic/apyrimidinic) site. The AP-lyase activity cleaves the phosphodiester bond 3' to the AP site by a beta-elimination, leaving a 3'-terminal unsaturated sugar and a product with a terminal 5'-phosphate. This is Endonuclease III from Rickettsia prowazekii (strain Madrid E).